A 261-amino-acid chain; its full sequence is Cytochrome c oxidase subunit 3 (261 aa).

The Mitochondrial matrix segment spans residues Met1–Pro15. The chain crosses the membrane as a helical span at residues Trp16–Trp34. Residues Phe35–Thr40 are Mitochondrial intermembrane-facing. Residues Thr41 to Thr66 form a helical membrane-spanning segment. Over Phe67–Thr72 the chain is Mitochondrial matrix. A helical membrane pass occupies residues Pro73 to Ser105. At Leu106–Glu128 the chain is on the mitochondrial intermembrane side. A helical transmembrane segment spans residues Val129 to Met152. Residues Glu153–Asn155 lie on the Mitochondrial matrix side of the membrane. A helical transmembrane segment spans residues Arg156–Glu183. Over Ala184 to Asp190 the chain is Mitochondrial intermembrane. Residues Gly191–Leu223 form a helical membrane-spanning segment. The Mitochondrial matrix portion of the chain corresponds to Lys224–His232. A helical membrane pass occupies residues Phe233–Ile256. The Mitochondrial intermembrane portion of the chain corresponds to Tyr257–Ser261.

It belongs to the cytochrome c oxidase subunit 3 family. As to quaternary structure, component of the cytochrome c oxidase (complex IV, CIV), a multisubunit enzyme composed of 14 subunits. The complex is composed of a catalytic core of 3 subunits MT-CO1, MT-CO2 and MT-CO3, encoded in the mitochondrial DNA, and 11 supernumerary subunits COX4I, COX5A, COX5B, COX6A, COX6B, COX6C, COX7A, COX7B, COX7C, COX8 and NDUFA4, which are encoded in the nuclear genome. The complex exists as a monomer or a dimer and forms supercomplexes (SCs) in the inner mitochondrial membrane with NADH-ubiquinone oxidoreductase (complex I, CI) and ubiquinol-cytochrome c oxidoreductase (cytochrome b-c1 complex, complex III, CIII), resulting in different assemblies (supercomplex SCI(1)III(2)IV(1) and megacomplex MCI(2)III(2)IV(2)).

It localises to the mitochondrion inner membrane. It carries out the reaction 4 Fe(II)-[cytochrome c] + O2 + 8 H(+)(in) = 4 Fe(III)-[cytochrome c] + 2 H2O + 4 H(+)(out). In terms of biological role, component of the cytochrome c oxidase, the last enzyme in the mitochondrial electron transport chain which drives oxidative phosphorylation. The respiratory chain contains 3 multisubunit complexes succinate dehydrogenase (complex II, CII), ubiquinol-cytochrome c oxidoreductase (cytochrome b-c1 complex, complex III, CIII) and cytochrome c oxidase (complex IV, CIV), that cooperate to transfer electrons derived from NADH and succinate to molecular oxygen, creating an electrochemical gradient over the inner membrane that drives transmembrane transport and the ATP synthase. Cytochrome c oxidase is the component of the respiratory chain that catalyzes the reduction of oxygen to water. Electrons originating from reduced cytochrome c in the intermembrane space (IMS) are transferred via the dinuclear copper A center (CU(A)) of subunit 2 and heme A of subunit 1 to the active site in subunit 1, a binuclear center (BNC) formed by heme A3 and copper B (CU(B)). The BNC reduces molecular oxygen to 2 water molecules using 4 electrons from cytochrome c in the IMS and 4 protons from the mitochondrial matrix. In Madoqua guentheri (Guenther's dik-dik), this protein is Cytochrome c oxidase subunit 3 (MT-CO3).